Consider the following 275-residue polypeptide: Intercellular adhesion molecule 2 (275 aa).

The N-terminal stretch at 1 to 24 (MSSFSYRTLTVALFALICCPGSDE) is a signal peptide. The Extracellular portion of the chain corresponds to 25-223 (KVFEVHVRPK…EIYEPVSDSQ (199 aa)). The Ig-like C2-type 1 domain maps to 41–98 (KGSLKVNCSTTCNQPEVGGLETSLDKILLDEQAQWKHYLVSNISHDTVLQCHFTCSGK). Asparagine 47, asparagine 82, asparagine 105, asparagine 153, asparagine 176, and asparagine 187 each carry an N-linked (GlcNAc...) asparagine glycan. 2 disulfide bridges follow: cysteine 48–cysteine 91 and cysteine 52–cysteine 95. An Ig-like C2-type 2 domain is found at 127–197 (GKSFTIECRV…FSCLAVLDLM (71 aa)). The cysteines at positions 134 and 190 are disulfide-linked. The chain crosses the membrane as a helical span at residues 224 to 248 (MVIIVTVVSVLLSLFVTSVLLCFIF). The Cytoplasmic portion of the chain corresponds to 249-275 (GQHLRQQRMGTYGVRAAWRRLPQAFRP). Residues 251–275 (HLRQQRMGTYGVRAAWRRLPQAFRP) form a required for interaction with EZR, MSN and RDX and co-localization to microvilli region.

The protein belongs to the immunoglobulin superfamily. ICAM family. Interacts with RDX, EZR and MSN.

It is found in the membrane. Its subcellular location is the cell projection. The protein resides in the microvillus. Functionally, ICAM proteins are ligands for the leukocyte adhesion protein LFA-1 (integrin alpha-L/beta-2). ICAM2 may play a role in lymphocyte recirculation by blocking LFA-1-dependent cell adhesion. It mediates adhesive interactions important for antigen-specific immune response, NK-cell mediated clearance, lymphocyte recirculation, and other cellular interactions important for immune response and surveillance. This chain is Intercellular adhesion molecule 2 (ICAM2), found in Pan troglodytes (Chimpanzee).